The sequence spans 239 residues: Lactate utilization protein A (239 aa).

The protein belongs to the LutA/YkgE family.

Functionally, is involved in L-lactate degradation and allows cells to grow with lactate as the sole carbon source. This chain is Lactate utilization protein A, found in Geobacillus kaustophilus (strain HTA426).